The primary structure comprises 442 residues: 3-dehydroquinate synthase, chloroplastic (442 aa).

Residues 1 to 61 (MASSFCPKQA…TTRLKVLATS (61 aa)) constitute a chloroplast transit peptide. Residues Asn119, 150-152 (DGE), Lys155, 183-188 (GGVIGD), 208-209 (TT), Lys221, Lys230, and 248-251 (TLNT) contribute to the NAD(+) site. Glu263 contributes to the a divalent metal cation binding site. Residue Lys305 participates in NAD(+) binding. Residues His326 and His343 each contribute to the a divalent metal cation site.

It belongs to the sugar phosphate cyclases superfamily. Dehydroquinate synthase family. In terms of assembly, homodimer. The cofactor is a divalent metal cation. NAD(+) is required as a cofactor. In terms of tissue distribution, highly expressed in roots. Lower expression in stems, flowers and cotyledons. Barely detected in leaves.

The protein resides in the plastid. Its subcellular location is the chloroplast. The catalysed reaction is 7-phospho-2-dehydro-3-deoxy-D-arabino-heptonate = 3-dehydroquinate + phosphate. Its pathway is metabolic intermediate biosynthesis; chorismate biosynthesis; chorismate from D-erythrose 4-phosphate and phosphoenolpyruvate: step 2/7. Its function is as follows. Catalyzes the second step in the shikimate pathway. The sequence is that of 3-dehydroquinate synthase, chloroplastic (DHQS) from Solanum lycopersicum (Tomato).